The primary structure comprises 87 residues: MPIIKSAKKRVRITEKRTAYNREWKEKIKQAIKEFEKVVEEGNVEEAEAKLREASKILDKSAGKGIIHKNKAARKKSQLTRQFNKIA.

This sequence belongs to the bacterial ribosomal protein bS20 family.

In terms of biological role, binds directly to 16S ribosomal RNA. The protein is Small ribosomal subunit protein bS20 of Halothermothrix orenii (strain H 168 / OCM 544 / DSM 9562).